Here is a 240-residue protein sequence, read N- to C-terminus: Probable transcriptional regulatory protein Nmul_A2722 (240 aa).

Belongs to the TACO1 family.

It is found in the cytoplasm. The protein is Probable transcriptional regulatory protein Nmul_A2722 of Nitrosospira multiformis (strain ATCC 25196 / NCIMB 11849 / C 71).